The sequence spans 356 residues: DNA polymerase IV (356 aa).

The 182-residue stretch at 6–187 (IIHIDMDAFY…QPIRRLHGVG (182 aa)) folds into the UmuC domain. Positions 10 and 105 each coordinate Mg(2+). Glu106 is an active-site residue.

It belongs to the DNA polymerase type-Y family. In terms of assembly, monomer. Requires Mg(2+) as cofactor.

It is found in the cytoplasm. It catalyses the reaction DNA(n) + a 2'-deoxyribonucleoside 5'-triphosphate = DNA(n+1) + diphosphate. Poorly processive, error-prone DNA polymerase involved in untargeted mutagenesis. Copies undamaged DNA at stalled replication forks, which arise in vivo from mismatched or misaligned primer ends. These misaligned primers can be extended by PolIV. Exhibits no 3'-5' exonuclease (proofreading) activity. May be involved in translesional synthesis, in conjunction with the beta clamp from PolIII. This chain is DNA polymerase IV, found in Halorhodospira halophila (strain DSM 244 / SL1) (Ectothiorhodospira halophila (strain DSM 244 / SL1)).